Reading from the N-terminus, the 196-residue chain is 3-dehydroquinate dehydratase (196 aa).

Residues E23–R25 and R45 each bind 3-dehydroquinate. H98 (proton donor/acceptor) is an active-site residue. Catalysis depends on K122, which acts as the Schiff-base intermediate with substrate. Residues R159 and Q182 each contribute to the 3-dehydroquinate site.

The protein belongs to the type-I 3-dehydroquinase family. In terms of assembly, homodimer.

The enzyme catalyses 3-dehydroquinate = 3-dehydroshikimate + H2O. Its pathway is metabolic intermediate biosynthesis; chorismate biosynthesis; chorismate from D-erythrose 4-phosphate and phosphoenolpyruvate: step 3/7. Involved in the third step of the chorismate pathway, which leads to the biosynthesis of aromatic amino acids. Catalyzes the cis-dehydration of 3-dehydroquinate (DHQ) and introduces the first double bond of the aromatic ring to yield 3-dehydroshikimate. This chain is 3-dehydroquinate dehydratase, found in Archaeoglobus fulgidus (strain ATCC 49558 / DSM 4304 / JCM 9628 / NBRC 100126 / VC-16).